The sequence spans 101 residues: Large ribosomal subunit protein uL24 (101 aa).

It belongs to the universal ribosomal protein uL24 family. As to quaternary structure, part of the 50S ribosomal subunit.

Its function is as follows. One of two assembly initiator proteins, it binds directly to the 5'-end of the 23S rRNA, where it nucleates assembly of the 50S subunit. One of the proteins that surrounds the polypeptide exit tunnel on the outside of the subunit. This Streptococcus pyogenes serotype M1 protein is Large ribosomal subunit protein uL24.